Here is a 301-residue protein sequence, read N- to C-terminus: Cardiolipin synthase (CMP-forming) (301 aa).

Residues 70–93 (SGAGKAAPRPAAGAGAAAEAPGGQ) form a disordered region. Positions 71-93 (GAGKAAPRPAAGAGAAAEAPGGQ) are enriched in low complexity. The next 5 membrane-spanning stretches (helical) occupy residues 109–129 (IPNM…YLII), 133–153 (FNIA…DGFI), 190–212 (IPVP…VFYV), 250–270 (LILV…SIYL), and 272–292 (ILWC…YHYG).

Belongs to the CDP-alcohol phosphatidyltransferase class-I family. It depends on a divalent metal cation as a cofactor. Highly expressed in tissues such as heart, skeletal muscle and liver.

It is found in the mitochondrion inner membrane. The catalysed reaction is a CDP-1,2-diacyl-sn-glycerol + a 1,2-diacyl-sn-glycero-3-phospho-(1'-sn-glycerol) = a cardiolipin + CMP + H(+). Functionally, catalyzes the synthesis of cardiolipin (CL) (diphosphatidylglycerol) by specifically transferring a phosphatidyl group from CDP-diacylglycerol to phosphatidylglycerol (PG). CL is a key phospholipid in mitochondrial membranes and plays important roles in maintaining the functional integrity and dynamics of mitochondria under both optimal and stress conditions. The protein is Cardiolipin synthase (CMP-forming) (CRLS1) of Homo sapiens (Human).